The primary structure comprises 494 residues: MTTPSLSSILRHTRPIFKETLRAARPTLQNALPNGFRIASESKDGDTCTVGVWIDAGSRWETEKNNGVAHFLEHMNFKGTGKRSRQDIEFGMEKMGAHLNAYTSREHTCYYVKCFKKDVPEAVDILADILLNSKRTEQDLDAERQTIVQEKEDVEARIDEVLMDHLHSAAFEGSGLGLSILGPLENIQKSITKGMIDDFVKTHYTGPRMALVGSGAVDHGQLCDLASKYFGALPTGQPKPSGFTRFLGGDKRETNQLNPLTHVAVAFQTPGISHPDAIKIKVLEQLLGSYSRDKGEAAYSCFARAIVMDFYDPKVGQFFRPNKAGHNPIHSLNAFWAPYSDVGLLGFYAIAEPGKSYGHEWENILHYAMRELIRVSRNISEEEFERAKNQLKLQTMLQLDGTTNIADDIGRQVLSFGARVPLASFFEQLDAISREDLIRVGPRVLLRQGPRGGGDWRHGQRARVRRPAGGDLLRGPLSCPLCTPLPRQSVVCMA.

Histidine 70 is a binding site for Zn(2+). Glutamate 73 serves as the catalytic Proton acceptor. Zn(2+) is bound by residues histidine 74 and glutamate 150.

It belongs to the peptidase M16 family. UQCRC1/QCR1 subfamily. Component of the ubiquinol-cytochrome c oxidoreductase (cytochrome b-c1 complex, complex III, CIII), a multisubunit enzyme composed of 10 subunits. The complex is composed of 3 respiratory subunits cytochrome b, cytochrome c1 and Rieske protein, 2 core protein subunits, and additional low-molecular weight protein subunits. The complex exists as an obligatory dimer and forms supercomplexes (SCs) in the inner mitochondrial membrane with cytochrome c oxidase (complex IV, CIV). Zn(2+) is required as a cofactor. In terms of processing, the N-terminus is blocked.

The protein resides in the mitochondrion inner membrane. Its function is as follows. Component of the ubiquinol-cytochrome c oxidoreductase, a multisubunit transmembrane complex that is part of the mitochondrial electron transport chain which drives oxidative phosphorylation. The respiratory chain contains 3 multisubunit complexes succinate dehydrogenase (complex II, CII), ubiquinol-cytochrome c oxidoreductase (cytochrome b-c1 complex, complex III, CIII) and cytochrome c oxidase (complex IV, CIV), that cooperate to transfer electrons derived from NADH and succinate to molecular oxygen, creating an electrochemical gradient over the inner membrane that drives transmembrane transport and the ATP synthase. The cytochrome b-c1 complex catalyzes electron transfer from ubiquinol to cytochrome c, linking this redox reaction to translocation of protons across the mitochondrial inner membrane, with protons being carried across the membrane as hydrogens on the quinol. In the process called Q cycle, 2 protons are consumed from the matrix, 4 protons are released into the intermembrane space and 2 electrons are passed to cytochrome c. This is Ubiquinol-cytochrome-c reductase complex core protein I, mitochondrial from Euglena gracilis.